Consider the following 230-residue polypeptide: Antiholin-like protein LrgB (230 aa).

Transmembrane regions (helical) follow at residues Met-5 to Phe-25, Gly-30 to Val-50, Gly-61 to Tyr-81, Trp-92 to Val-112, Ile-149 to Leu-169, Pro-177 to Ile-197, and Ile-209 to Ile-229.

Belongs to the CidB/LrgB family. LrgB subfamily.

Its subcellular location is the cell membrane. Inhibits the expression or activity of extracellular murein hydrolases by interacting, possibly with LrgA, with the holin-like protein CidA. The LrgAB and CidA proteins may affect the proton motive force of the membrane. May be involved in programmed cell death (PCD), possibly triggering PCD in response to antibiotics and environmental stresses. This Bacillus cereus (strain Q1) protein is Antiholin-like protein LrgB.